The chain runs to 37 residues: Large ribosomal subunit protein bL36B (37 aa).

The protein belongs to the bacterial ribosomal protein bL36 family.

This chain is Large ribosomal subunit protein bL36B, found in Aeromonas salmonicida (strain A449).